The primary structure comprises 179 residues: Coatomer subunit zeta-2 (179 aa).

This sequence belongs to the adaptor complexes small subunit family. In terms of assembly, oligomeric complex that consists of at least the alpha, beta, beta', gamma, delta, epsilon and zeta subunits.

The protein resides in the cytoplasm. The protein localises to the golgi apparatus membrane. It is found in the cytoplasmic vesicle. It localises to the COPI-coated vesicle membrane. Its function is as follows. The coatomer is a cytosolic protein complex that binds to dilysine motifs and reversibly associates with Golgi non-clathrin-coated vesicles, which further mediate biosynthetic protein transport from the ER, via the Golgi up to the trans Golgi network. Coatomer complex is required for budding from Golgi membranes, and is essential for the retrograde Golgi-to-ER transport of dilysine-tagged proteins. The zeta subunit may be involved in regulating the coat assembly and, hence, the rate of biosynthetic protein transport due to its association-dissociation properties with the coatomer complex. In Arabidopsis thaliana (Mouse-ear cress), this protein is Coatomer subunit zeta-2.